The sequence spans 274 residues: Sulfur carrier protein FdhD (274 aa).

Cysteine 121 serves as the catalytic Cysteine persulfide intermediate. Mo-bis(molybdopterin guanine dinucleotide) is bound at residue 258-263; the sequence is FSKPGR.

The protein belongs to the FdhD family.

Its subcellular location is the cytoplasm. Its function is as follows. Required for formate dehydrogenase (FDH) activity. Acts as a sulfur carrier protein that transfers sulfur from IscS to the molybdenum cofactor prior to its insertion into FDH. The sequence is that of Sulfur carrier protein FdhD from Yersinia pseudotuberculosis serotype O:1b (strain IP 31758).